The primary structure comprises 65 residues: Hainantoxin-X-3 (65 aa).

Residues 1–20 (MNMKILVLVAVLCLVVSTHA) form the signal peptide. A propeptide spanning residues 21–37 (ERHSKTDMEDSPMIQER) is cleaved from the precursor. 2 disulfides stabilise this stretch: Cys46/Cys59 and Cys55/Cys64.

The protein belongs to the neurotoxin 36 family. 02 subfamily. In terms of tissue distribution, expressed by the venom gland.

It localises to the secreted. Functionally, reversibly blocks N-type calcium channels (Cav2.2/CACNA1B) in rat dorsal root ganglion cells. Elicits no toxic symptoms in either vertebrates or invertebrates during a period of 48 hours post-injection, when it was assayed in vivo by direct injection into mice and cockroaches. The protein is Hainantoxin-X-3 of Cyriopagopus hainanus (Chinese bird spider).